Consider the following 131-residue polypeptide: D-ribose pyranase (131 aa).

H20 acts as the Proton donor in catalysis. Substrate is bound by residues D28, H98, and 120–122 (YAN).

This sequence belongs to the RbsD / FucU family. RbsD subfamily. In terms of assembly, homodecamer.

It localises to the cytoplasm. It carries out the reaction beta-D-ribopyranose = beta-D-ribofuranose. Its pathway is carbohydrate metabolism; D-ribose degradation; D-ribose 5-phosphate from beta-D-ribopyranose: step 1/2. Functionally, catalyzes the interconversion of beta-pyran and beta-furan forms of D-ribose. This chain is D-ribose pyranase, found in Clostridium botulinum (strain Eklund 17B / Type B).